The chain runs to 597 residues: Probable translation initiation factor IF-2 (597 aa).

The tr-type G domain maps to 13 to 229 (LRTPIVCVMG…LLGLAQKFLE (217 aa)). The interval 22-29 (GHVDHGKT) is G1. A GTP-binding site is contributed by 22–29 (GHVDHGKT). The tract at residues 47-51 (AITQH) is G2. Residues 84–87 (DTPG) form a G3 region. Residues 84–88 (DTPGH) and 138–141 (NKID) each bind GTP. The G4 stretch occupies residues 138 to 141 (NKID). A G5 region spans residues 206–208 (SAV).

This sequence belongs to the TRAFAC class translation factor GTPase superfamily. Classic translation factor GTPase family. IF-2 subfamily.

Functionally, function in general translation initiation by promoting the binding of the formylmethionine-tRNA to ribosomes. Seems to function along with eIF-2. This is Probable translation initiation factor IF-2 from Methanosarcina acetivorans (strain ATCC 35395 / DSM 2834 / JCM 12185 / C2A).